We begin with the raw amino-acid sequence, 580 residues long: Peptidyl-prolyl cis-trans isomerase-like 2 (580 aa).

The 74-residue stretch at 42-115 (KRLPFRFCSL…GEYIDPVTYK (74 aa)) folds into the U-box domain. 5 disordered regions span residues 182-201 (IKEG…EDPS), 227-259 (QERA…SYQS), 439-459 (SPTL…RPTP), 479-530 (QKKQ…SSTT), and 553-580 (FVDE…SSWD). One can recognise a PPIase cyclophilin-type domain in the interval 309-468 (QKGYARISTT…PDIRIVDVTI (160 aa)). A compositionally biased stretch (polar residues) spans 439-457 (SPTLNKLETHPVNPTTNRP). Positions 490 to 507 (EANRTAENDEEGSRRAED) are enriched in basic and acidic residues.

This sequence belongs to the cyclophilin-type PPIase family. PPIL2 subfamily.

Its subcellular location is the nucleus. The enzyme catalyses [protein]-peptidylproline (omega=180) = [protein]-peptidylproline (omega=0). It carries out the reaction S-ubiquitinyl-[E2 ubiquitin-conjugating enzyme]-L-cysteine + [acceptor protein]-L-lysine = [E2 ubiquitin-conjugating enzyme]-L-cysteine + N(6)-ubiquitinyl-[acceptor protein]-L-lysine.. It functions in the pathway protein modification; protein ubiquitination. May catalyze the cis-trans isomerization of proline imidic peptide bonds in oligopeptides thereby assisting the folding of proteins. May also function as a chaperone, playing a role in intracellular transport of proteins. May also have a protein ubiquitin ligase activity acting as an E3 ubiquitin protein ligase or as a ubiquitin-ubiquitin ligase promoting elongation of ubiquitin chains on proteins. In Emericella nidulans (strain FGSC A4 / ATCC 38163 / CBS 112.46 / NRRL 194 / M139) (Aspergillus nidulans), this protein is Peptidyl-prolyl cis-trans isomerase-like 2 (cyp8).